The primary structure comprises 602 residues: MRKHLNDLYKQIEKFPKTSGCYKMYSKDNKILYIGKAKNLRSRVKNYFSKRTSHKTKILMNNVTNIEIITTNSEYEALLLECNLIKKYKPTYNIKLKDDKGYPMIRITCEKYPRIFKTRKIINDGSEYFGPYVNVKNLDLVLDLINKTFKTKKCKKKSKNPCLYFHMGQCLGVCYREDLEDEYRKEIEQIKHILNGNISKLLNDIEIKMKEVIMKENFEAAIKLKETKKSLIEISQTQIITKIDKLSEDYLYIHKTNSLNTIVILKYKDGKLTEKDIHFDESIYEEDELIEKFITQYYTSPNMIVPDKIHIFKKIDTSNITKLINELKNIKTEIIYKETQDNIKIIEMATSNAKLALITYNHEKNKAIENLKTILEMKKLPKTIEGFDIAHINGYKTVASLVTFKMGKPFKDGYRVYKINSLSNGEIDDCKAIKEVISRRYSKLINEQLKLPDLILIDGGKGQLNAAYSILKGLRIEEKIAICALAKKEEIIFLPNKNQGIKLQKRNSALQVLQNVRDEAHRRANNFNNKLHNNIKLNYTKIKGIGEQKAKKILKVLGTYKDILLLNEDEIATKMKINITMANKIKKFAEEQNLNNKQNNHI.

The GIY-YIG domain maps to 17–94 (KTSGCYKMYS…IKKYKPTYNI (78 aa)). The region spanning 199–234 (SKLLNDIEIKMKEVIMKENFEAAIKLKETKKSLIEI) is the UVR domain.

This sequence belongs to the UvrC family. Interacts with UvrB in an incision complex.

Its subcellular location is the cytoplasm. Functionally, the UvrABC repair system catalyzes the recognition and processing of DNA lesions. UvrC both incises the 5' and 3' sides of the lesion. The N-terminal half is responsible for the 3' incision and the C-terminal half is responsible for the 5' incision. The protein is UvrABC system protein C of Borrelia duttonii (strain Ly).